Here is a 255-residue protein sequence, read N- to C-terminus: Hydroxyacylglutathione hydrolase (255 aa).

His-56, His-58, Asp-60, His-61, His-114, Asp-133, and His-171 together coordinate Zn(2+).

This sequence belongs to the metallo-beta-lactamase superfamily. Glyoxalase II family. Monomer. It depends on Zn(2+) as a cofactor.

The catalysed reaction is an S-(2-hydroxyacyl)glutathione + H2O = a 2-hydroxy carboxylate + glutathione + H(+). Its pathway is secondary metabolite metabolism; methylglyoxal degradation; (R)-lactate from methylglyoxal: step 2/2. Its function is as follows. Thiolesterase that catalyzes the hydrolysis of S-D-lactoyl-glutathione to form glutathione and D-lactic acid. The polypeptide is Hydroxyacylglutathione hydrolase (Nitrobacter hamburgensis (strain DSM 10229 / NCIMB 13809 / X14)).